The chain runs to 138 residues: Large-conductance mechanosensitive channel (138 aa).

3 helical membrane-spanning segments follow: residues 15–35, 38–58, and 80–100; these read VDLA…NSIV, IIMP…MFIQ, and GNFI…FLVV.

It belongs to the MscL family. In terms of assembly, homopentamer.

The protein localises to the cell inner membrane. In terms of biological role, channel that opens in response to stretch forces in the membrane lipid bilayer. May participate in the regulation of osmotic pressure changes within the cell. This Brucella ovis (strain ATCC 25840 / 63/290 / NCTC 10512) protein is Large-conductance mechanosensitive channel.